Here is a 254-residue protein sequence, read N- to C-terminus: Diphthine synthase (254 aa).

S-adenosyl-L-methionine is bound by residues Asp-83, Leu-86, 111–112 (SI), Leu-163, and Val-205.

Belongs to the diphthine synthase family. Homodimer.

The catalysed reaction is 2-[(3S)-amino-3-carboxypropyl]-L-histidyl-[translation elongation factor 2] + 3 S-adenosyl-L-methionine = diphthine-[translation elongation factor 2] + 3 S-adenosyl-L-homocysteine + 3 H(+). It participates in protein modification; peptidyl-diphthamide biosynthesis. Functionally, S-adenosyl-L-methionine-dependent methyltransferase that catalyzes the trimethylation of the amino group of the modified target histidine residue in translation elongation factor 2 (EF-2), to form an intermediate called diphthine. The three successive methylation reactions represent the second step of diphthamide biosynthesis. This Pyrobaculum aerophilum (strain ATCC 51768 / DSM 7523 / JCM 9630 / CIP 104966 / NBRC 100827 / IM2) protein is Diphthine synthase.